Reading from the N-terminus, the 466-residue chain is Ribulose bisphosphate carboxylase large chain (466 aa).

An N6,N6,N6-trimethyllysine modification is found at lysine 5. Substrate-binding residues include asparagine 114 and threonine 164. Lysine 166 functions as the Proton acceptor in the catalytic mechanism. Position 168 (lysine 168) interacts with substrate. Lysine 192, aspartate 194, and glutamate 195 together coordinate Mg(2+). Lysine 192 is modified (N6-carboxylysine). Histidine 285 (proton acceptor) is an active-site residue. Substrate is bound by residues arginine 286, histidine 318, and serine 370.

It belongs to the RuBisCO large chain family. Type I subfamily. As to quaternary structure, heterohexadecamer of 8 large chains and 8 small chains; disulfide-linked. The disulfide link is formed within the large subunit homodimers. Mg(2+) serves as cofactor. The disulfide bond which can form in the large chain dimeric partners within the hexadecamer appears to be associated with oxidative stress and protein turnover.

It localises to the plastid. It is found in the chloroplast. It catalyses the reaction 2 (2R)-3-phosphoglycerate + 2 H(+) = D-ribulose 1,5-bisphosphate + CO2 + H2O. It carries out the reaction D-ribulose 1,5-bisphosphate + O2 = 2-phosphoglycolate + (2R)-3-phosphoglycerate + 2 H(+). In terms of biological role, ruBisCO catalyzes two reactions: the carboxylation of D-ribulose 1,5-bisphosphate, the primary event in carbon dioxide fixation, as well as the oxidative fragmentation of the pentose substrate in the photorespiration process. Both reactions occur simultaneously and in competition at the same active site. The chain is Ribulose bisphosphate carboxylase large chain from Gonopterodendron arboreum (Maracaibo lignum-vitae).